The chain runs to 92 residues: YcgL domain-containing protein Sfri_1738 (92 aa).

The 85-residue stretch at 1–85 folds into the YcgL domain; the sequence is MICAVYKSGR…PQINLLEQHK (85 aa).

This is YcgL domain-containing protein Sfri_1738 from Shewanella frigidimarina (strain NCIMB 400).